We begin with the raw amino-acid sequence, 152 residues long: UPF0178 protein KPK_4355 (152 aa).

The protein belongs to the UPF0178 family.

The chain is UPF0178 protein KPK_4355 from Klebsiella pneumoniae (strain 342).